We begin with the raw amino-acid sequence, 513 residues long: Protein STB3 (513 aa).

3 disordered regions span residues 1–20, 134–159, and 227–249; these read MSENQKEVSPPQAISVKSEA, KDLISQESQRRKSNNSNSNSGGKVEM, and YQNKSRNSSNNFGKSSNGDPYSF. The segment covering 134–143 has biased composition (basic and acidic residues); sequence KDLISQESQR. Residues 230 to 244 show a composition bias toward low complexity; it reads KSRNSSNNFGKSSNG. The residue at position 254 (S254) is a Phosphoserine. Disordered stretches follow at residues 282–354, 373–437, and 450–513; these read RRRS…KESS, NSKA…EDWE, and APNI…SLKS. Residues 296 to 306 are compositionally biased toward polar residues; sequence KLNTHQDSSYL. The segment covering 307–324 has biased composition (low complexity); that stretch reads SPNTTSTTTPSNNNSNSN. Composition is skewed to polar residues over residues 373–396, 409–418, 450–463, and 470–479; these read NSKATSVSTSPKLEEQMNVSSNPI, QHLNGESSPQ, APNIDSVASSTNGV, and NPSFTNSQNG. The span at 488–500 shows a compositional bias: basic and acidic residues; the sequence is DQQKHEQQPRNGE.

It belongs to the STB3 family. Interacts with SIN3.

Its subcellular location is the cytoplasm. This chain is Protein STB3 (STB3), found in Saccharomyces cerevisiae (strain ATCC 204508 / S288c) (Baker's yeast).